The sequence spans 337 residues: Glyceraldehyde-3-phosphate dehydrogenase (337 aa).

NAD(+) is bound by residues arginine 12–isoleucine 13, aspartate 34, and arginine 79. D-glyceraldehyde 3-phosphate is bound by residues serine 150–threonine 152, threonine 181, threonine 210–glycine 211, and arginine 233. Cysteine 151 functions as the Nucleophile in the catalytic mechanism. Asparagine 315 serves as a coordination point for NAD(+).

Belongs to the glyceraldehyde-3-phosphate dehydrogenase family. Homotetramer.

The protein resides in the cytoplasm. The catalysed reaction is D-glyceraldehyde 3-phosphate + phosphate + NAD(+) = (2R)-3-phospho-glyceroyl phosphate + NADH + H(+). The protein operates within carbohydrate degradation; glycolysis; pyruvate from D-glyceraldehyde 3-phosphate: step 1/5. The sequence is that of Glyceraldehyde-3-phosphate dehydrogenase from Cryphonectria parasitica (Chestnut blight fungus).